A 577-amino-acid polypeptide reads, in one-letter code: Probable cytochrome c biosynthesis protein (577 aa).

This sequence belongs to the CcmF/CycK/Ccl1/NrfE/CcsA family.

The protein localises to the mitochondrion. Functionally, could be involved in assembly and maturation of cytochromes c. May play a role in guidance of apocytochromes and heme groups for the covalent linkage introduced by the cytochrome-c-heme lyase. In Oenothera berteroana (Bertero's evening primrose), this protein is Probable cytochrome c biosynthesis protein.